We begin with the raw amino-acid sequence, 336 residues long: Eukaryotic translation initiation factor 3 subunit I (336 aa).

WD repeat units lie at residues 8–47, 50–91, 146–185, 190–229, and 287–326; these read GHER…RLGT, GHLG…KVWE, CNES…QLEN, EFDH…ILKT, and GHFG…FDFM.

It belongs to the eIF-3 subunit I family. Component of the eukaryotic translation initiation factor 3 (eIF-3) complex.

The protein resides in the cytoplasm. Component of the eukaryotic translation initiation factor 3 (eIF-3) complex, which is involved in protein synthesis of a specialized repertoire of mRNAs and, together with other initiation factors, stimulates binding of mRNA and methionyl-tRNAi to the 40S ribosome. The eIF-3 complex specifically targets and initiates translation of a subset of mRNAs involved in cell proliferation. The polypeptide is Eukaryotic translation initiation factor 3 subunit I (tif34) (Aspergillus terreus (strain NIH 2624 / FGSC A1156)).